Here is a 113-residue protein sequence, read N- to C-terminus: ATP-dependent Clp protease adapter protein ClpS (113 aa).

A disordered region spans residues 1-26 (MLMQPLMMSDNPDDESDLGLLTKTRP).

This sequence belongs to the ClpS family. Binds to the N-terminal domain of the chaperone ClpA.

Functionally, involved in the modulation of the specificity of the ClpAP-mediated ATP-dependent protein degradation. The sequence is that of ATP-dependent Clp protease adapter protein ClpS from Ruegeria sp. (strain TM1040) (Silicibacter sp.).